A 193-amino-acid chain; its full sequence is ATP-dependent Clp protease proteolytic subunit (193 aa).

S98 functions as the Nucleophile in the catalytic mechanism. Residue H123 is part of the active site.

It belongs to the peptidase S14 family. As to quaternary structure, fourteen ClpP subunits assemble into 2 heptameric rings which stack back to back to give a disk-like structure with a central cavity, resembling the structure of eukaryotic proteasomes.

It localises to the cytoplasm. The enzyme catalyses Hydrolysis of proteins to small peptides in the presence of ATP and magnesium. alpha-casein is the usual test substrate. In the absence of ATP, only oligopeptides shorter than five residues are hydrolyzed (such as succinyl-Leu-Tyr-|-NHMec, and Leu-Tyr-Leu-|-Tyr-Trp, in which cleavage of the -Tyr-|-Leu- and -Tyr-|-Trp bonds also occurs).. Functionally, cleaves peptides in various proteins in a process that requires ATP hydrolysis. Has a chymotrypsin-like activity. Plays a major role in the degradation of misfolded proteins. This Agathobacter rectalis (strain ATCC 33656 / DSM 3377 / JCM 17463 / KCTC 5835 / VPI 0990) (Eubacterium rectale) protein is ATP-dependent Clp protease proteolytic subunit.